Here is a 536-residue protein sequence, read N- to C-terminus: uncharacterized protein (536 aa).

Disordered stretches follow at residues 1 to 76 (MSFT…SPAS) and 204 to 237 (NWNSSSSFTSSTSSTPISSSYSSSGTLPSKSNKS). Low complexity-rich tracts occupy residues 7–76 (TSSV…SPAS) and 204–234 (NWNSSSSFTSSTSSTPISSSYSSSGTLPSKS). The helical transmembrane segment at 247 to 267 (CSVAIPVGVVLILIGLGIFLW) threads the bilayer. Disordered stretches follow at residues 287-354 (YGFN…LLGG) and 373-536 (DASD…LNLF). Positions 290 to 326 (NPNQPSNFRSPNRAPSTNNRYRGWNGSPTPAAGNNTN) are enriched in polar residues. Residues 327-350 (GRPVAPRPSAGAGGANPPAASQPG) are compositionally biased toward low complexity. A helical membrane pass occupies residues 351–371 (LLGGSSNSAGPIAAATAAGVG). Residues 403 to 424 (SASNEAEATMPPSNGSNFSEGL) are compositionally biased toward polar residues. The span at 430–454 (ESGPAVGAAGAAAEAAEHSGSGSDS) shows a compositional bias: low complexity. A compositionally biased stretch (polar residues) spans 480–509 (SYGSRAALSSRSQSNLLSPTSTGASNQPNY). Positions 517 to 527 (SSSNVSIPRSS) are enriched in low complexity.

It is found in the membrane. This is an uncharacterized protein from Schizosaccharomyces pombe (strain 972 / ATCC 24843) (Fission yeast).